A 379-amino-acid polypeptide reads, in one-letter code: Cytochrome b (379 aa).

Transmembrane regions (helical) follow at residues 33 to 53 (FGSL…FLAM), 77 to 98 (WTIR…FIHV), 113 to 133 (WNVG…GYVL), and 178 to 198 (FFAL…IHLL). Heme b contacts are provided by His83 and His97. Residues His182 and His196 each coordinate heme b. An a ubiquinone-binding site is contributed by His201. Helical transmembrane passes span 226–246 (TKDF…ALFY), 288–308 (LGGV…PFLQ), 320–340 (LSQF…WIGG), and 347–367 (FINI…FIMP).

This sequence belongs to the cytochrome b family. In terms of assembly, the cytochrome bc1 complex contains 11 subunits: 3 respiratory subunits (MT-CYB, CYC1 and UQCRFS1), 2 core proteins (UQCRC1 and UQCRC2) and 6 low-molecular weight proteins (UQCRH/QCR6, UQCRB/QCR7, UQCRQ/QCR8, UQCR10/QCR9, UQCR11/QCR10 and a cleavage product of UQCRFS1). This cytochrome bc1 complex then forms a dimer. The cofactor is heme b.

The protein localises to the mitochondrion inner membrane. Its function is as follows. Component of the ubiquinol-cytochrome c reductase complex (complex III or cytochrome b-c1 complex) that is part of the mitochondrial respiratory chain. The b-c1 complex mediates electron transfer from ubiquinol to cytochrome c. Contributes to the generation of a proton gradient across the mitochondrial membrane that is then used for ATP synthesis. The protein is Cytochrome b (MT-CYB) of Lepilemur sahamalazensis (Sahamalaza sportive lemur).